A 159-amino-acid polypeptide reads, in one-letter code: SsrA-binding protein (159 aa).

Belongs to the SmpB family.

It is found in the cytoplasm. In terms of biological role, required for rescue of stalled ribosomes mediated by trans-translation. Binds to transfer-messenger RNA (tmRNA), required for stable association of tmRNA with ribosomes. tmRNA and SmpB together mimic tRNA shape, replacing the anticodon stem-loop with SmpB. tmRNA is encoded by the ssrA gene; the 2 termini fold to resemble tRNA(Ala) and it encodes a 'tag peptide', a short internal open reading frame. During trans-translation Ala-aminoacylated tmRNA acts like a tRNA, entering the A-site of stalled ribosomes, displacing the stalled mRNA. The ribosome then switches to translate the ORF on the tmRNA; the nascent peptide is terminated with the 'tag peptide' encoded by the tmRNA and targeted for degradation. The ribosome is freed to recommence translation, which seems to be the essential function of trans-translation. This Actinobacillus pleuropneumoniae serotype 5b (strain L20) protein is SsrA-binding protein.